A 120-amino-acid polypeptide reads, in one-letter code: MQRIMLRAKLHRVTVTQADLNYEGSCGIDQDLLDAADMKEFEKIELYNVNNGERFSTYIIKGERGSGEISLNGAAARRAHLGDQLIICTYAPMTDEEIATYKPKVILVNEKNGIKEIKKV.

The Schiff-base intermediate with substrate; via pyruvic acid role is filled by serine 25. Serine 25 is modified (pyruvic acid (Ser)). Residue threonine 57 participates in substrate binding. The active-site Proton donor is tyrosine 58. Substrate is bound at residue 73–75; sequence GAA.

It belongs to the PanD family. Heterooctamer of four alpha and four beta subunits. Pyruvate serves as cofactor. Is synthesized initially as an inactive proenzyme, which is activated by self-cleavage at a specific serine bond to produce a beta-subunit with a hydroxyl group at its C-terminus and an alpha-subunit with a pyruvoyl group at its N-terminus.

The protein localises to the cytoplasm. It carries out the reaction L-aspartate + H(+) = beta-alanine + CO2. It functions in the pathway cofactor biosynthesis; (R)-pantothenate biosynthesis; beta-alanine from L-aspartate: step 1/1. Functionally, catalyzes the pyruvoyl-dependent decarboxylation of aspartate to produce beta-alanine. In Cupriavidus taiwanensis (strain DSM 17343 / BCRC 17206 / CCUG 44338 / CIP 107171 / LMG 19424 / R1) (Ralstonia taiwanensis (strain LMG 19424)), this protein is Aspartate 1-decarboxylase.